Consider the following 412-residue polypeptide: Polyferredoxin protein MvhB (412 aa).

4Fe-4S ferredoxin-type domains follow at residues 2–29 (IIVN…VTPE), 30–57 (DVIY…LEDL), 67–96 (GRIV…LDEG), 97–127 (KVKK…VEGI), 138–166 (EGPI…LDKV), 168–197 (GVIE…ISGR), 207–236 (KKFE…PRTS), 238–266 (LTVE…LEVE), 276–305 (EGLV…VVTK), 314–345 (EKVD…LVDM), 357–386 (KRVQ…LTDE), and 385–412 (DEKV…LSLK). Residues C9, C12, C15, and C19 each coordinate [4Fe-4S] cluster. The [4Fe-4S] cluster site is built by C76, C79, C82, C86, C107, C110, C113, C117, C146, C149, C152, C156, C177, C180, C183, C187, C216, C219, C222, C226, C246, C249, C252, and C256. [4Fe-4S] cluster-binding residues include C325, C328, C331, C335, C366, C369, C372, C376, C394, C397, C400, and C404.

[4Fe-4S] cluster is required as a cofactor.

This Methanothermobacter thermautotrophicus (strain ATCC 29096 / DSM 1053 / JCM 10044 / NBRC 100330 / Delta H) (Methanobacterium thermoautotrophicum) protein is Polyferredoxin protein MvhB (mvhB).